The chain runs to 145 residues: D-aminoacyl-tRNA deacylase (145 aa).

The Gly-cisPro motif, important for rejection of L-amino acids signature appears at 137–138 (GP).

This sequence belongs to the DTD family. As to quaternary structure, homodimer.

The protein localises to the cytoplasm. It carries out the reaction glycyl-tRNA(Ala) + H2O = tRNA(Ala) + glycine + H(+). The enzyme catalyses a D-aminoacyl-tRNA + H2O = a tRNA + a D-alpha-amino acid + H(+). Functionally, an aminoacyl-tRNA editing enzyme that deacylates mischarged D-aminoacyl-tRNAs. Also deacylates mischarged glycyl-tRNA(Ala), protecting cells against glycine mischarging by AlaRS. Acts via tRNA-based rather than protein-based catalysis; rejects L-amino acids rather than detecting D-amino acids in the active site. By recycling D-aminoacyl-tRNA to D-amino acids and free tRNA molecules, this enzyme counteracts the toxicity associated with the formation of D-aminoacyl-tRNA entities in vivo and helps enforce protein L-homochirality. The sequence is that of D-aminoacyl-tRNA deacylase from Shewanella halifaxensis (strain HAW-EB4).